The sequence spans 235 residues: Phosphoribosylaminoimidazole-succinocarboxamide synthase (235 aa).

The protein belongs to the SAICAR synthetase family.

The enzyme catalyses 5-amino-1-(5-phospho-D-ribosyl)imidazole-4-carboxylate + L-aspartate + ATP = (2S)-2-[5-amino-1-(5-phospho-beta-D-ribosyl)imidazole-4-carboxamido]succinate + ADP + phosphate + 2 H(+). It participates in purine metabolism; IMP biosynthesis via de novo pathway; 5-amino-1-(5-phospho-D-ribosyl)imidazole-4-carboxamide from 5-amino-1-(5-phospho-D-ribosyl)imidazole-4-carboxylate: step 1/2. This Streptococcus agalactiae serotype Ia (strain ATCC 27591 / A909 / CDC SS700) protein is Phosphoribosylaminoimidazole-succinocarboxamide synthase.